A 245-amino-acid chain; its full sequence is Eukaryotic translation initiation factor 6 (245 aa).

Phosphoserine; by CK1 occurs at positions 174 and 175.

This sequence belongs to the eIF-6 family. In terms of assembly, monomer. Associates with the 60S ribosomal subunit. In terms of processing, phosphorylation at Ser-174 and Ser-175 promotes nuclear export.

The protein localises to the cytoplasm. It is found in the nucleus. Its subcellular location is the nucleolus. Functionally, binds to the 60S ribosomal subunit and prevents its association with the 40S ribosomal subunit to form the 80S initiation complex in the cytoplasm. Is also involved in ribosome biogenesis. Associates with pre-60S subunits in the nucleus and is involved in its nuclear export. This chain is Eukaryotic translation initiation factor 6, found in Candida albicans (strain SC5314 / ATCC MYA-2876) (Yeast).